Reading from the N-terminus, the 220-residue chain is CDP-diacylglycerol--inositol 3-phosphatidyltransferase (220 aa).

The Cytoplasmic portion of the chain corresponds to 1–20; that stretch reads MSSNSTPEKVTAEHVLWYIP. The helical transmembrane segment at 21–41 threads the bilayer; it reads NKIGYVRVITAALSFFVMKNH. Over 42–45 the chain is Lumenal; the sequence is PTAF. The helical transmembrane segment at 46-66 threads the bilayer; it reads TWLYSTSCLLDALDGTMARKY. Mg(2+) is bound by residues Asp56 and Asp59. A CDP-1,2-diacyl-sn-glycerol is bound by residues Gly60, Arg64, and Ser70. Residues 67–75 lie on the Cytoplasmic side of the membrane; that stretch reads NQVSSLGAV. Residues 76-96 traverse the membrane as a helical segment; sequence LDMVTDRSSTAGLMCFLCVQY. Residues Asp77 and Asp81 each coordinate Mg(2+). The active-site Proton acceptor is the Asp81. Residues 97–98 are Lumenal-facing; the sequence is PQ. Residues 99–119 form a helical membrane-spanning segment; sequence WCVFFQLMLGLDITSHYMHMY. At 120–145 the chain is on the cytoplasmic side; the sequence is ASLSAGKTSHKSVGEGESRLLHLYYT. A helical transmembrane segment spans residues 146–166; that stretch reads RRDVLFTICAFNELFYAGLYL. Residues 167-170 are Lumenal-facing; the sequence is QLFS. A helical transmembrane segment spans residues 171 to 191; sequence NSATFGKWTTIISFPGYVFKQ. Residues 192–220 lie on the Cytoplasmic side of the membrane; sequence TANVVQLKRAALILADNDAKNANEKNKTY.

This sequence belongs to the CDP-alcohol phosphatidyltransferase class-I family. Mn(2+) is required as a cofactor. It depends on Mg(2+) as a cofactor.

The protein resides in the microsome membrane. Its subcellular location is the endoplasmic reticulum membrane. It localises to the golgi apparatus membrane. The protein localises to the mitochondrion outer membrane. It carries out the reaction a CDP-1,2-diacyl-sn-glycerol + myo-inositol = a 1,2-diacyl-sn-glycero-3-phospho-(1D-myo-inositol) + CMP + H(+). Functionally, catalyzes the synthesis of phosphatidylinositol (PtdIns). This is CDP-diacylglycerol--inositol 3-phosphatidyltransferase from Saccharomyces cerevisiae (strain ATCC 204508 / S288c) (Baker's yeast).